The sequence spans 169 residues: Protein MGF 110-12L (169 aa).

Transmembrane regions (helical) follow at residues 2 to 20 (KVFL…LTYQ), 121 to 141 (QCCF…FAIC), and 148 to 168 (TTIK…PILN).

The protein belongs to the asfivirus MGF 110 family.

Its subcellular location is the host membrane. Functionally, plays a role in virus cell tropism, and may be required for efficient virus replication in macrophages. The chain is Protein MGF 110-12L from African swine fever virus (isolate Pig/Kenya/KEN-50/1950) (ASFV).